The following is a 294-amino-acid chain: Very long chain fatty acid elongase 5 (294 aa).

7 helical membrane-spanning segments follow: residues tryptophan 26–valine 46, isoleucine 64–valine 84, valine 112–leucine 132, phenylalanine 141–valine 161, phenylalanine 172–isoleucine 192, leucine 207–phenylalanine 227, and tryptophan 231–isoleucine 251. The disordered stretch occupies residues alanine 261–aspartate 294. A compositionally biased stretch (polar residues) spans asparagine 274 to valine 286.

The protein belongs to the ELO family. ELOVL5 subfamily. Expression is highest in intestine, followed by brain and heart, and lowest in gill. Also expressed in liver, spleen and muscle.

The protein resides in the endoplasmic reticulum membrane. The protein localises to the cell projection. It localises to the dendrite. The catalysed reaction is a very-long-chain acyl-CoA + malonyl-CoA + H(+) = a very-long-chain 3-oxoacyl-CoA + CO2 + CoA. It catalyses the reaction (6Z,9Z,12Z)-octadecatrienoyl-CoA + malonyl-CoA + H(+) = (8Z,11Z,14Z)-3-oxoeicosatrienoyl-CoA + CO2 + CoA. It carries out the reaction (9Z,12Z,15Z)-octadecatrienoyl-CoA + malonyl-CoA + H(+) = (11Z,14Z,17Z)-3-oxoeicosatrienoyl-CoA + CO2 + CoA. The enzyme catalyses (9Z)-hexadecenoyl-CoA + malonyl-CoA + H(+) = 3-oxo-(11Z)-octadecenoyl-CoA + CO2 + CoA. The catalysed reaction is (9Z)-octadecenoyl-CoA + malonyl-CoA + H(+) = 3-oxo-(11Z)-eicosenoyl-CoA + CO2 + CoA. It catalyses the reaction (11Z)-octadecenoyl-CoA + malonyl-CoA + H(+) = 3-oxo-(13Z)-eicosenoyl-CoA + CO2 + CoA. It carries out the reaction (9Z,12Z)-octadecadienoyl-CoA + malonyl-CoA + H(+) = (11Z,14Z)-3-oxoicosa-11,14-dienoyl-CoA + CO2 + CoA. The enzyme catalyses (6Z,9Z,12Z,15Z)-octadecatetraenoyl-CoA + malonyl-CoA + H(+) = (8Z,11Z,14Z,17Z)-3-oxoicosatetraenoyl-CoA + CO2 + CoA. The catalysed reaction is (5Z,8Z,11Z,14Z)-eicosatetraenoyl-CoA + malonyl-CoA + H(+) = (7Z,10Z,13Z,16Z)-3-oxodocosatetraenoyl-CoA + CO2 + CoA. It catalyses the reaction (5Z,8Z,11Z,14Z,17Z)-eicosapentaenoyl-CoA + malonyl-CoA + H(+) = 3-oxo-(7Z,10Z,13Z,16Z,19Z)-docosapentaenoyl-CoA + CO2 + CoA. Its pathway is lipid metabolism; polyunsaturated fatty acid biosynthesis. Functionally, catalyzes the first and rate-limiting reaction of the four reactions that constitute the long-chain fatty acids elongation cycle. This endoplasmic reticulum-bound enzymatic process allows the addition of 2 carbons to the chain of long- and very long-chain fatty acids (VLCFAs) per cycle. Condensing enzyme that acts specifically toward polyunsaturated acyl-CoA with the higher activity toward C18:3(n-6) acyl-CoA. May participate in the production of monounsaturated and of polyunsaturated VLCFAs of different chain lengths that are involved in multiple biological processes as precursors of membrane lipids and lipid mediators. In conditions where the essential linoleic and alpha linoleic fatty acids are lacking it is also involved in the synthesis of Mead acid from oleic acid. The sequence is that of Very long chain fatty acid elongase 5 from Tachysurus fulvidraco (Yellow catfish).